The following is a 301-amino-acid chain: Ras-related GTP-binding protein A (301 aa).

Residues 9-16 (GRSESGKT), 57-61 (DCGGQ), and 122-125 (HKMD) contribute to the GTP site.

This sequence belongs to the GTR/RAG GTP-binding protein family.

The protein resides in the cytoplasm. Its subcellular location is the nucleus. It localises to the lysosome. Guanine nucleotide-binding protein that plays a crucial role in the cellular response to amino acid availability through regulation of the TOR signaling cascade. The sequence is that of Ras-related GTP-binding protein A (ragA) from Dictyostelium discoideum (Social amoeba).